Consider the following 467-residue polypeptide: Putative sulfoquinovose importer (467 aa).

A run of 12 helical transmembrane segments spans residues 17 to 37, 54 to 74, 88 to 108, 121 to 141, 160 to 180, 185 to 205, 238 to 258, 275 to 295, 303 to 323, 325 to 345, 379 to 399, and 414 to 434; these read IAYG…TLYL, IIFL…GFLL, PFIL…FIAT, ALFM…GAMI, GGAT…QSLF, VGYA…MMLC, LLVL…KLAI, WMGF…PLTV, VYLA…FWGS, SFTF…VNSL, ISAA…GYVP, and LIFI…GFFY.

Belongs to the sodium:galactoside symporter (TC 2.A.2) family.

The protein resides in the cell inner membrane. Its function is as follows. Could be involved in sulfoquinovose import. This chain is Putative sulfoquinovose importer (yihO), found in Escherichia coli (strain K12).